Reading from the N-terminus, the 210-residue chain is 3-hexulose-6-phosphate synthase (210 aa).

This sequence belongs to the HPS/KGPDC family. HPS subfamily.

The catalysed reaction is D-ribulose 5-phosphate + formaldehyde = D-arabino-hex-3-ulose 6-phosphate. The protein operates within one-carbon metabolism; formaldehyde assimilation via RuMP pathway; D-fructose 6-phosphate from D-ribulose 5-phosphate and formaldehyde: step 1/2. Its function is as follows. Catalyzes the condensation of ribulose 5-phosphate with formaldehyde to form 3-hexulose 6-phosphate. This Staphylococcus aureus (strain NCTC 8325 / PS 47) protein is 3-hexulose-6-phosphate synthase.